A 76-amino-acid polypeptide reads, in one-letter code: DNA-directed RNA polymerase subunit epsilon (76 aa).

It belongs to the RNA polymerase subunit epsilon family. In terms of assembly, RNAP is composed of a core of 2 alpha, a beta and a beta' subunit. The core is associated with a delta subunit, and at least one of epsilon or omega. When a sigma factor is associated with the core the holoenzyme is formed, which can initiate transcription.

It carries out the reaction RNA(n) + a ribonucleoside 5'-triphosphate = RNA(n+1) + diphosphate. Its function is as follows. A non-essential component of RNA polymerase (RNAP). The sequence is that of DNA-directed RNA polymerase subunit epsilon from Streptococcus gordonii (strain Challis / ATCC 35105 / BCRC 15272 / CH1 / DL1 / V288).